The chain runs to 147 residues: Ribonuclease H (147 aa).

The RNase H type-1 domain occupies 1-142; it reads MAGKVVMYTD…ADELANRGVR (142 aa). Aspartate 10, glutamate 48, aspartate 70, and aspartate 134 together coordinate Mg(2+).

The protein belongs to the RNase H family. In terms of assembly, monomer. Mg(2+) serves as cofactor.

It is found in the cytoplasm. The catalysed reaction is Endonucleolytic cleavage to 5'-phosphomonoester.. In terms of biological role, endonuclease that specifically degrades the RNA of RNA-DNA hybrids. The chain is Ribonuclease H from Marinobacter nauticus (strain ATCC 700491 / DSM 11845 / VT8) (Marinobacter aquaeolei).